Reading from the N-terminus, the 120-residue chain is ATP-dependent Clp protease adapter protein ClpS (120 aa).

It belongs to the ClpS family. As to quaternary structure, binds to the N-terminal domain of the chaperone ClpA.

Involved in the modulation of the specificity of the ClpAP-mediated ATP-dependent protein degradation. In Azotobacter vinelandii (strain DJ / ATCC BAA-1303), this protein is ATP-dependent Clp protease adapter protein ClpS.